A 146-amino-acid chain; its full sequence is 3-dehydroquinate dehydratase (146 aa).

Tyr-24 functions as the Proton acceptor in the catalytic mechanism. Positions 73, 79, and 86 each coordinate substrate. His-99 serves as the catalytic Proton donor. Residues 100 to 101 and Arg-110 contribute to the substrate site; that span reads LS.

It belongs to the type-II 3-dehydroquinase family. In terms of assembly, homododecamer.

The catalysed reaction is 3-dehydroquinate = 3-dehydroshikimate + H2O. Its pathway is metabolic intermediate biosynthesis; chorismate biosynthesis; chorismate from D-erythrose 4-phosphate and phosphoenolpyruvate: step 3/7. Functionally, catalyzes a trans-dehydration via an enolate intermediate. This Shewanella oneidensis (strain ATCC 700550 / JCM 31522 / CIP 106686 / LMG 19005 / NCIMB 14063 / MR-1) protein is 3-dehydroquinate dehydratase.